A 394-amino-acid polypeptide reads, in one-letter code: 3-amino-4-hydroxybenzoate 2-monooxygenase (394 aa).

Ala16 and Arg109 together coordinate FAD. The active-site Proton acceptor is the Tyr214. Asp287 provides a ligand contact to FAD.

The protein belongs to the 6-hydroxynicotinate 3-monooxygenase family. It depends on FAD as a cofactor.

The catalysed reaction is 3-amino-4-hydroxybenzoate + NADPH + O2 + H(+) = 3-amino-2,4-dihydroxybenzoate + NADP(+) + H2O. It functions in the pathway antibiotic biosynthesis. In terms of biological role, part of a gene cluster involved in the biosynthesis of cremeomycin, a light-sensitive o-diazoquinone with antibacterial and antiproliferative effects. Catalyzes the hydroxylation of 3-amino-4-hydroxybenzoate (3,4-AHBA) to 3-amino-2,4-dihydroxybenzoate (3,2,4-ADHBA). In Streptomyces cremeus, this protein is 3-amino-4-hydroxybenzoate 2-monooxygenase.